A 178-amino-acid polypeptide reads, in one-letter code: ATP synthase subunit delta (178 aa).

Belongs to the ATPase delta chain family. F-type ATPases have 2 components, F(1) - the catalytic core - and F(0) - the membrane proton channel. F(1) has five subunits: alpha(3), beta(3), gamma(1), delta(1), epsilon(1). F(0) has three main subunits: a(1), b(2) and c(10-14). The alpha and beta chains form an alternating ring which encloses part of the gamma chain. F(1) is attached to F(0) by a central stalk formed by the gamma and epsilon chains, while a peripheral stalk is formed by the delta and b chains.

It is found in the cell membrane. Functionally, f(1)F(0) ATP synthase produces ATP from ADP in the presence of a proton or sodium gradient. F-type ATPases consist of two structural domains, F(1) containing the extramembraneous catalytic core and F(0) containing the membrane proton channel, linked together by a central stalk and a peripheral stalk. During catalysis, ATP synthesis in the catalytic domain of F(1) is coupled via a rotary mechanism of the central stalk subunits to proton translocation. In terms of biological role, this protein is part of the stalk that links CF(0) to CF(1). It either transmits conformational changes from CF(0) to CF(1) or is implicated in proton conduction. This chain is ATP synthase subunit delta, found in Streptococcus pyogenes serotype M3 (strain ATCC BAA-595 / MGAS315).